The sequence spans 81 residues: Acyl carrier protein (81 aa).

The 76-residue stretch at 4 to 79 (SEIFGKVKDI…AAVDFIAGKV (76 aa)) folds into the Carrier domain. The residue at position 39 (S39) is an O-(pantetheine 4'-phosphoryl)serine.

It belongs to the acyl carrier protein (ACP) family. Post-translationally, 4'-phosphopantetheine is transferred from CoA to a specific serine of apo-ACP by AcpS. This modification is essential for activity because fatty acids are bound in thioester linkage to the sulfhydryl of the prosthetic group.

Its subcellular location is the cytoplasm. Its pathway is lipid metabolism; fatty acid biosynthesis. Its function is as follows. Carrier of the growing fatty acid chain in fatty acid biosynthesis. The chain is Acyl carrier protein from Acaryochloris marina (strain MBIC 11017).